The primary structure comprises 98 residues: MPRSLKKGPFIDFKLEKRILDLNAKDEKKVVKTWSRSSMISPDFVGHTIAVHNGKTHVPVYVSDNMVGHKLGEFAPTRTFRGHAGGKAEKGGSAPRKK.

The segment at T77 to K98 is disordered.

It belongs to the universal ribosomal protein uS19 family.

In terms of biological role, protein S19 forms a complex with S13 that binds strongly to the 16S ribosomal RNA. This is Small ribosomal subunit protein uS19 from Chlorobium limicola (strain DSM 245 / NBRC 103803 / 6330).